A 229-amino-acid chain; its full sequence is Potassium/proton antiporter CemA (229 aa).

Transmembrane regions (helical) follow at residues 7 to 27 (FNPLLYLTSIVFLSWSISFSF), 107 to 127 (ILNFLTNIISFAILSVFYILG), 154 to 174 (ILLLTDLCIGFHSPHGWELMI), and 189 to 209 (IISGLVSTFPVILDTIFKYLI).

The protein belongs to the CemA family.

Its subcellular location is the plastid. It is found in the chloroplast inner membrane. It catalyses the reaction K(+)(in) + H(+)(out) = K(+)(out) + H(+)(in). Contributes to K(+)/H(+) antiport activity by supporting proton efflux to control proton extrusion and homeostasis in chloroplasts in a light-dependent manner to modulate photosynthesis. Prevents excessive induction of non-photochemical quenching (NPQ) under continuous-light conditions. Indirectly promotes efficient inorganic carbon uptake into chloroplasts. In Ranunculus macranthus (Large buttercup), this protein is Potassium/proton antiporter CemA.